The primary structure comprises 401 residues: NADH-quinone oxidoreductase subunit D 2 (401 aa).

It belongs to the complex I 49 kDa subunit family. In terms of assembly, NDH-1 is composed of 14 different subunits. Subunits NuoB, C, D, E, F, and G constitute the peripheral sector of the complex.

It localises to the cell inner membrane. It carries out the reaction a quinone + NADH + 5 H(+)(in) = a quinol + NAD(+) + 4 H(+)(out). In terms of biological role, NDH-1 shuttles electrons from NADH, via FMN and iron-sulfur (Fe-S) centers, to quinones in the respiratory chain. The immediate electron acceptor for the enzyme in this species is believed to be ubiquinone. Couples the redox reaction to proton translocation (for every two electrons transferred, four hydrogen ions are translocated across the cytoplasmic membrane), and thus conserves the redox energy in a proton gradient. The chain is NADH-quinone oxidoreductase subunit D 2 from Koribacter versatilis (strain Ellin345).